The following is a 127-amino-acid chain: Glycine cleavage system H protein (127 aa).

Residues T24–K105 form the Lipoyl-binding domain. At K65 the chain carries N6-lipoyllysine.

Belongs to the GcvH family. The glycine cleavage system is composed of four proteins: P, T, L and H. (R)-lipoate serves as cofactor.

Functionally, the glycine cleavage system catalyzes the degradation of glycine. The H protein shuttles the methylamine group of glycine from the P protein to the T protein. The chain is Glycine cleavage system H protein from Chlorobium phaeobacteroides (strain DSM 266 / SMG 266 / 2430).